Here is a 549-residue protein sequence, read N- to C-terminus: Undecaprenyl phosphate-alpha-4-amino-4-deoxy-L-arabinose arabinosyl transferase (549 aa).

Helical transmembrane passes span 9–29 (LLLI…GLWI), 80–100 (LFGV…LAYL), 112–132 (SLAC…SGYA), 136–156 (PQFT…LDAG), 176–196 (FLTK…PYML), 204–224 (LLGY…PWAL), 256–276 (PWWF…GLLP), 288–308 (QPPV…FSLS), 312–332 (LPTY…HALV), 346–366 (NGLL…YLQL), 376–396 (FELF…LAQW), and 402–422 (AWAA…AAMP).

It belongs to the glycosyltransferase 83 family.

The protein localises to the cell inner membrane. The catalysed reaction is 4-amino-4-deoxy-alpha-L-arabinopyranosyl di-trans,octa-cis-undecaprenyl phosphate + lipid IVA = lipid IIA + di-trans,octa-cis-undecaprenyl phosphate.. The protein operates within lipopolysaccharide metabolism; 4-amino-4-deoxy-beta-L-arabinose-lipid A biosynthesis. Catalyzes the transfer of the L-Ara4N moiety of the glycolipid undecaprenyl phosphate-alpha-L-Ara4N to lipid A. The modified arabinose is attached to lipid A and is required for resistance to polymyxin and cationic antimicrobial peptides. The sequence is that of Undecaprenyl phosphate-alpha-4-amino-4-deoxy-L-arabinose arabinosyl transferase from Pseudomonas paraeruginosa (strain DSM 24068 / PA7) (Pseudomonas aeruginosa (strain PA7)).